The sequence spans 183 residues: NADH-quinone oxidoreductase subunit B (183 aa).

Positions 60, 61, 125, and 154 each coordinate [4Fe-4S] cluster.

This sequence belongs to the complex I 20 kDa subunit family. NDH-1 is composed of 14 different subunits. Subunits NuoB, C, D, E, F, and G constitute the peripheral sector of the complex. The cofactor is [4Fe-4S] cluster.

Its subcellular location is the cell inner membrane. It catalyses the reaction a quinone + NADH + 5 H(+)(in) = a quinol + NAD(+) + 4 H(+)(out). Functionally, NDH-1 shuttles electrons from NADH, via FMN and iron-sulfur (Fe-S) centers, to quinones in the respiratory chain. The immediate electron acceptor for the enzyme in this species is believed to be ubiquinone. Couples the redox reaction to proton translocation (for every two electrons transferred, four hydrogen ions are translocated across the cytoplasmic membrane), and thus conserves the redox energy in a proton gradient. The polypeptide is NADH-quinone oxidoreductase subunit B (Desulfovibrio desulfuricans (strain ATCC 27774 / DSM 6949 / MB)).